The sequence spans 406 residues: Homocysteine-responsive endoplasmic reticulum-resident ubiquitin-like domain member 2 protein (406 aa).

A Ubiquitin-like domain is found at 10 to 89 (VTLIIKAPNQ…HMVHLVCTSR (80 aa)). The disordered stretch occupies residues 86 to 154 (CTSRTPPSSP…TLPQAQTDQA (69 aa)). Low complexity-rich tracts occupy residues 87 to 98 (TSRTPPSSPKSS) and 106 to 126 (ALAS…PSSG). The span at 127–154 (QETLSLAVGSSSEGLRQRTLPQAQTDQA) shows a compositional bias: polar residues. Residues 302-322 (FIMVMGAMLLVYLHQAGWFPF) traverse the membrane as a helical segment.

It is found in the membrane. Functionally, could be involved in the unfolded protein response (UPR) pathway. This is Homocysteine-responsive endoplasmic reticulum-resident ubiquitin-like domain member 2 protein (HERPUD2) from Homo sapiens (Human).